The following is a 35-amino-acid chain: U2-agatoxin-Aop1a (35 aa).

Disulfide bonds link Cys3/Cys19, Cys10/Cys24, and Cys18/Cys34. At Leu35 the chain carries Leucine amide.

The protein belongs to the neurotoxin 01 (U2-agtx) family. As to expression, expressed by the venom gland.

The protein localises to the secreted. Insect-selective toxin causing rapid but reversible paralysis in crickets. Suppresses the excitatory postsynaptic potentials evoked in lobster neuromuscular synaptic preparations, possibly by blocking the presynaptic calcium channel (Cav). Induces instantaneous reversible paralysis when injected into crickets. The sequence is that of U2-agatoxin-Aop1a from Allagelena opulenta (Funnel weaving spider).